The primary structure comprises 303 residues: AP2-like ethylene-responsive transcription factor At1g79700 (303 aa).

Over residues 1–10 the composition is skewed to basic residues; the sequence is MAKVSGRSKK. A disordered region spans residues 1-55; sequence MAKVSGRSKKTIVDDEISDKTASASESASIALTSKRKRKSPPRNAPLQRSSPYRG. A compositionally biased stretch (polar residues) spans 20-32; that stretch reads KTASASESASIAL. 2 consecutive DNA-binding regions (AP2/ERF) follow at residues 52–118 and 154–202; these read PYRG…LNFP and KYRG…TNFD. The interval 212 to 259 is disordered; sequence AADKADSDSKPIRSPSREPESSDDNKSPKSEEVIEPSTSPEVIPTRRS. A compositionally biased stretch (basic and acidic residues) spans 214 to 243; that stretch reads DKADSDSKPIRSPSREPESSDDNKSPKSEE.

Belongs to the AP2/ERF transcription factor family. AP2 subfamily.

It localises to the nucleus. Its function is as follows. Probably acts as a transcriptional activator. Binds to the GCC-box pathogenesis-related promoter element. May be involved in the regulation of gene expression by stress factors and by components of stress signal transduction pathways. This is AP2-like ethylene-responsive transcription factor At1g79700 from Arabidopsis thaliana (Mouse-ear cress).